Here is a 422-residue protein sequence, read N- to C-terminus: Serine hydroxymethyltransferase 2 (422 aa).

Residues L121 and 125–127 each bind (6S)-5,6,7,8-tetrahydrofolate; that span reads GHL. K230 carries the N6-(pyridoxal phosphate)lysine modification.

This sequence belongs to the SHMT family. As to quaternary structure, homodimer. Pyridoxal 5'-phosphate is required as a cofactor.

The protein resides in the cytoplasm. The enzyme catalyses (6R)-5,10-methylene-5,6,7,8-tetrahydrofolate + glycine + H2O = (6S)-5,6,7,8-tetrahydrofolate + L-serine. Its pathway is one-carbon metabolism; tetrahydrofolate interconversion. The protein operates within amino-acid biosynthesis; glycine biosynthesis; glycine from L-serine: step 1/1. In terms of biological role, catalyzes the reversible interconversion of serine and glycine with tetrahydrofolate (THF) serving as the one-carbon carrier. This reaction serves as the major source of one-carbon groups required for the biosynthesis of purines, thymidylate, methionine, and other important biomolecules. Also exhibits THF-independent aldolase activity toward beta-hydroxyamino acids, producing glycine and aldehydes, via a retro-aldol mechanism. In Agrobacterium fabrum (strain C58 / ATCC 33970) (Agrobacterium tumefaciens (strain C58)), this protein is Serine hydroxymethyltransferase 2.